Here is a 676-residue protein sequence, read N- to C-terminus: Double-stranded RNA-specific editase Adar (676 aa).

Residues 1 to 51 (MKFDSRVMLNSANNNSPQHPVSAPSDINMNGYNRKLPQKRGYEMPKYSDPK) are disordered. The segment covering 8 to 31 (MLNSANNNSPQHPVSAPSDINMNG) has biased composition (polar residues). Positions 40–51 (RGYEMPKYSDPK) are enriched in basic and acidic residues. DRBM domains follow at residues 61–127 (QPKN…SFIQ) and 197–272 (ITVD…SLCN). Residues 348 to 672 (SVSTGTKCVS…LKKPIEQDEF (325 aa)) enclose the A to I editase domain. H372 serves as a coordination point for Zn(2+). E374 functions as the Proton donor in the catalytic mechanism. Zn(2+)-binding residues include C430 and C493.

As to expression, expressed in embryonic nervous system; late stage 13 sees ventral nerve cord expression which spreads to brain by stage 16. Expression is maintained through to adulthood.

Has A-to-I RNA editing activity on extended dsRNA: edits RNA-binding protein Rnp4F. A-to-I editing of pre-mRNAs acts predominantly through nervous system targets to affect adult nervous system integrity, function and behavior. Essential for adaptation to environmental stresses, such as oxygen deprivation, and for the prevention of premature neuronal degeneration, through the editing of ion channels as targets. In Drosophila melanogaster (Fruit fly), this protein is Double-stranded RNA-specific editase Adar.